A 375-amino-acid polypeptide reads, in one-letter code: uncharacterized protein (375 aa).

Belongs to the mimivirus L17x/L18x family.

This is an uncharacterized protein from Acanthamoeba polyphaga (Amoeba).